The sequence spans 119 residues: Large ribosomal subunit protein P3 (119 aa).

A disordered region spans residues 81–119 (GAAAGAASGGAAAEAPKAEEKKEEEKEESEDDLGFSLFD). Positions 84-95 (AGAASGGAAAEA) are enriched in low complexity.

It belongs to the eukaryotic ribosomal protein P1/P2 family. Phosphorylated.

Its function is as follows. Plays an important role in the elongation step of protein synthesis. The protein is Large ribosomal subunit protein P3 of Oryza sativa subsp. japonica (Rice).